A 291-amino-acid chain; its full sequence is MTTLAIDIGGTKLAAALIGADGQIRDRRELPTPASQTPEALREALAALVSPLQAHAQQVAIASTGIIRDGSLLALNPHNLGGLLHFPLVKTLEQLTDLPTIAINDAQAAAWAEYQGLEGDITDMVFITVSTGVGGGVVSGGKLLTGPGGLAGHIGHTLADPHGPVCGCGRTGCVEAIASGRGIAAAAQGELAGADAKAIFKRVGQGDEQAQQLIHRSARVLARLIADIKATTDCQCVVVGGSVGLAEGYLALVETYLAQEPAAFHVDLLAAHYRHDAGLLGAALLAQGEKL.

ATP-binding positions include alanine 5 to lysine 12 and glycine 132 to serine 139. Residues histidine 156, cysteine 166, cysteine 168, and cysteine 173 each coordinate Zn(2+).

This sequence belongs to the ROK (NagC/XylR) family. NanK subfamily. As to quaternary structure, homodimer.

It carries out the reaction an N-acyl-D-mannosamine + ATP = an N-acyl-D-mannosamine 6-phosphate + ADP + H(+). It functions in the pathway amino-sugar metabolism; N-acetylneuraminate degradation; D-fructose 6-phosphate from N-acetylneuraminate: step 2/5. Catalyzes the phosphorylation of N-acetylmannosamine (ManNAc) to ManNAc-6-P. In Escherichia fergusonii (strain ATCC 35469 / DSM 13698 / CCUG 18766 / IAM 14443 / JCM 21226 / LMG 7866 / NBRC 102419 / NCTC 12128 / CDC 0568-73), this protein is N-acetylmannosamine kinase.